The sequence spans 504 residues: Patatin-like phospholipase domain-containing protein 2 (504 aa).

The Cytoplasmic portion of the chain corresponds to 1–8; the sequence is MFPREKTW. Residues 9-29 form a helical membrane-spanning segment; it reads NISFAGCGFLGVYYVGVASCL. The PNPLA domain maps to 10-179; it reads ISFAGCGFLG…SDNLPLYELK (170 aa). Residues 14–19 carry the GXGXXG motif; the sequence is GCGFLG. Over 30 to 42 the chain is Extracellular; that stretch reads REHAPFLVANATH. N-linked (GlcNAc...) asparagine glycosylation is present at N39. The helical transmembrane segment at 43–63 threads the bilayer; it reads IYGASAGALTATALVTGVCLG. Positions 45–49 match the GXSXG motif; sequence GASAG. The active-site Nucleophile is S47. The Cytoplasmic segment spans residues 64 to 137; sequence EAGAKFIEVS…IISHFNSKDE (74 aa). A Glycyl lysine isopeptide (Lys-Gly) (interchain with G-Cter in ubiquitin) cross-link involves residue K92. The chain crosses the membrane as a helical span at residues 138-158; the sequence is LIQANVCSGFIPVYCGLIPPS. The Extracellular portion of the chain corresponds to 159-329; it reads LQGVRYVDGG…TTLSNMLPVR (171 aa). Residue D166 is the Proton acceptor of the active site. The DGA/G motif lies at 166-168; it reads DGG. The helical transmembrane segment at 330–350 threads the bilayer; sequence LATAMMVPYTLPLESALSFTI. Topologically, residues 351-504 are cytoplasmic; that stretch reads RLLEWLPDVP…ARPVIGALGL (154 aa). S372 bears the Phosphoserine; in vitro mark. S404 carries the post-translational modification Phosphoserine; by PKA and FAM20C. A Phosphoserine modification is found at S428. Positions 463-492 are disordered; that stretch reads APADPAPAPADPASPQHQLAGPAPLLSTPA.

In terms of assembly, interacts with ABHD5; this association stimulates PNPLA2 triglyceride hydrolase activity. Interacts with SERPINF1; this interaction stimulates the phospholipase A2 activity of PNPLA2. Despite a colocalization in lipid droplets, it probably does not interact with PLIN. Interacts with PLIN5; prevents interaction with ABHD5. Interacts with FAF2. Post-translationally, phosphorylation at Ser-404 by PKA is increased during fasting and moderate intensity exercise, and moderately increases lipolytic activity. Phosphorylation at Ser-404 is increased upon beta-adrenergic stimulation. Ubiquitinated by PEX2 in response to reactive oxygen species (ROS), leading to its degradation. Ubiquitination is stimulated by LDAH. Highest expression in adipose tissue. Also detected in heart, skeletal muscle, and portions of the gastrointestinal tract. Detected in normal retina and retinoblastoma cells. Detected in retinal pigment epithelium and, at lower intensity, in the inner segments of photoreceptors and in the ganglion cell layer of the neural retina (at protein level).

It localises to the lipid droplet. The protein localises to the cell membrane. The protein resides in the cytoplasm. It catalyses the reaction a triacylglycerol + H2O = a diacylglycerol + a fatty acid + H(+). It carries out the reaction a triacylglycerol + H2O = a 1,2-diacylglycerol + a fatty acid + H(+). The enzyme catalyses a triacylglycerol + H2O = a 1,3-diacylglycerol + a fatty acid + H(+). The catalysed reaction is a triacyl-sn-glycerol + H2O = a 1,3-diacyl-sn-glycerol + a fatty acid + H(+). It catalyses the reaction a triacyl-sn-glycerol + H2O = a 2,3-diacyl-sn-glycerol + a fatty acid + H(+). It carries out the reaction a 1-acylglycerol + a 1,3-diacylglycerol = a triacylglycerol + glycerol. The enzyme catalyses a 1-acylglycerol + a 1,2-diacylglycerol = a triacylglycerol + glycerol. The catalysed reaction is 2 a 1-acylglycerol = a 1,2-diacylglycerol + glycerol. It catalyses the reaction a triacylglycerol + all-trans-retinol = an all-trans-retinyl ester + a diacylglycerol. It carries out the reaction 1,2-di-(9Z-octadecenoyl)-glycerol + (9Z)-octadecenoate + H(+) = 1,2,3-tri-(9Z-octadecenoyl)-glycerol + H2O. The enzyme catalyses 1,2,3-tri-(9Z-octadecenoyl)-glycerol + H2O = 1,3-di-(9Z-octadecenoyl)-glycerol + (9Z)-octadecenoate + H(+). The catalysed reaction is 1-(9Z-octadecenoyl)-glycerol + 1,3-di-(9Z-octadecenoyl)-glycerol = 1,2,3-tri-(9Z-octadecenoyl)-glycerol + glycerol. It catalyses the reaction 1-(9Z-octadecenoyl)-glycerol + 1,2-di-(9Z-octadecenoyl)-glycerol = 1,2,3-tri-(9Z-octadecenoyl)-glycerol + glycerol. It carries out the reaction 2 1-(9Z-octadecenoyl)-glycerol = 1,2-di-(9Z-octadecenoyl)-glycerol + glycerol. The enzyme catalyses 1,2,3-tri-(9Z-octadecenoyl)-glycerol + all-trans-retinol = all-trans-retinyl 9Z-octadecenoate + di-(9Z)-octadecenoylglycerol. The catalysed reaction is 1,2,3-tri-(9Z)-hexadecenoylglycerol + H2O = 1,3-di-(9Z)-hexadecenoylglycerol + (9Z)-hexadecenoate + H(+). It catalyses the reaction 1,2,3-tri-(9Z,12Z)-octadecadienoylglycerol + H2O = 1,3-di-(9Z,12Z)-octadecadienoylglycerol + (9Z,12Z)-octadecadienoate + H(+). It carries out the reaction 1,2,3-tri-(9Z,12Z,15Z)-octadecatrienoylglycerol + H2O = 1,3-di-(9Z,12Z,15Z)-octadecatrienoylglycerol + (9Z,12Z,15Z)-octadecatrienoate + H(+). The enzyme catalyses 1,3-di-(9Z)-octadecenoyl-2-hexadecanoylglycerol + H2O = 1,3-di-(9Z-octadecenoyl)-glycerol + hexadecanoate + H(+). The catalysed reaction is 1,2-di-(9Z)-octadecenoyl-3-hexadecanoyl-sn-glycerol + H2O = 1-(9Z)-octadecenoyl-3-hexadecanoyl-sn-glycerol + (9Z)-octadecenoate + H(+). It catalyses the reaction 1-hexadecanoyl-2,3-di-(9Z)-octadecenoyl-sn-glycerol + H2O = 1-hexadecanoyl-3-(9Z)-octadecenoyl-sn-glycerol + (9Z)-octadecenoate + H(+). It carries out the reaction 1,2,3-tri-(9Z-octadecenoyl)-glycerol + H2O = 2,3-di-(9Z)-octadecenoyl-sn-glycerol + (9Z)-octadecenoate + H(+). The enzyme catalyses 1,2,3-tri-(9Z)-hexadecenoylglycerol + H2O = 2,3-di-(9Z)-hexadecenoyl-sn-glycerol + (9Z)-hexadecenoate + H(+). The catalysed reaction is 1,2,3-tri-(9Z,12Z)-octadecadienoylglycerol + H2O = 2,3-di-(9Z,12Z)-octadecadienoyl-sn-glycerol + (9Z,12Z)-octadecadienoate + H(+). It catalyses the reaction 1,2,3-tri-(9Z,12Z,15Z)-octadecatrienoylglycerol + H2O = 2,3-di-(9Z,12Z,15Z)-octadecatrienoyl-sn-glycerol + (9Z,12Z,15Z)-octadecatrienoate + H(+). It carries out the reaction 1,3-di-(9Z)-octadecenoyl-2-hexadecanoylglycerol + H2O = 2-hexadecanoyl-3-(9Z)-octadecenoyl-sn-glycerol + (9Z)-octadecenoate + H(+). The enzyme catalyses 1-hexadecanoyl-2,3-di-(9Z)-octadecenoyl-sn-glycerol + H2O = 2,3-di-(9Z)-octadecenoyl-sn-glycerol + hexadecanoate + H(+). The catalysed reaction is 1,2-di-(9Z)-octadecenoyl-3-hexadecanoyl-sn-glycerol + H2O = 2-(9Z-octadecenoyl)-3-hexadecanoyl-sn-glycerol + (9Z)-octadecenoate + H(+). It catalyses the reaction a 1,2-diacyl-sn-glycero-3-phosphocholine + H2O = a 1-acyl-sn-glycero-3-phosphocholine + a fatty acid + H(+). It carries out the reaction 1,2,3-tri-(9Z-octadecenoyl)-glycerol + 9-hydroxy-octadecanoate = 9-(9Z-octadecenoyloxy)-octadecanoate + 2,3-di-(9Z)-octadecenoyl-sn-glycerol. The enzyme catalyses 1-hexadecanoyl-2,3-di-(9Z)-octadecenoyl-sn-glycerol + 9-hydroxy-octadecanoate = 9-hexadecanoyloxy-octadecanoate + 2,3-di-(9Z)-octadecenoyl-sn-glycerol. The catalysed reaction is 1,2,3-tri-(10Z)-heptadecenoylglycerol + 9-hydroxy-octadecanoate = 2,3-di-(10Z-heptadecenoyl)-sn-glycerol + 9-(10Z-heptadecenoyloxy)-octadecanoate. It catalyses the reaction 1,2,3-tri-(9Z,12Z)-octadecadienoylglycerol + 9-hydroxy-octadecanoate = 2,3-di-(9Z,12Z)-octadecadienoyl-sn-glycerol + 9-(9Z,12Z-octadecadienoyloxy)-octadecanoate. It carries out the reaction 1,2,3-tri-(9Z)-hexadecenoylglycerol + 9-hydroxy-octadecanoate = 2,3-di-(9Z)-hexadecenoyl-sn-glycerol + 9-(9Z-hexadecenoyloxy)-octadecanoate. The enzyme catalyses 9-hydroxy-octadecanoate + 1,2-di-(9Z-octadecenoyl)-sn-glycerol = 9-(9Z-octadecenoyloxy)-octadecanoate + 2-(9Z-octadecenoyl)-glycerol. The catalysed reaction is 1-hexadecanoyl-2,3-di-(9Z)-octadecenoyl-sn-glycerol + 9-hydroxy-octadecanoate = 1-hexadecanoyl-3-(9Z)-octadecenoyl-sn-glycerol + 9-(9Z-octadecenoyloxy)-octadecanoate. It participates in glycerolipid metabolism; triacylglycerol degradation. The triglyceride lipase activity is inhibited by BEL ((E)-6-(bromomethylene)-3-(1-naphthalenyl)-2H-tetrahydropyran-2-one), a suicide substrate inhibitor. No differences in the acylglycerol transacylase was detected in the presence or absence of ATP. Its function is as follows. Catalyzes the initial step in triglyceride hydrolysis in adipocyte and non-adipocyte lipid droplets. Exhibits a strong preference for the hydrolysis of long-chain fatty acid esters at the sn-2 position of the glycerol backbone and acts coordinately with LIPE/HLS and DGAT2 within the lipolytic cascade. Also possesses acylglycerol transacylase and phospholipase A2 activities. Transfers fatty acid from triglyceride to retinol, hydrolyzes retinylesters, and generates 1,3-diacylglycerol from triglycerides. Regulates adiposome size and may be involved in the degradation of adiposomes. Catalyzes the formation of an ester bond between hydroxy fatty acids and fatty acids derived from triglycerides or diglycerides to generate fatty acid esters of hydroxy fatty acids (FAHFAs) in adipocytes. Acts antagonistically with LDAH in regulation of cellular lipid stores. Inhibits LDAH-stimulated lipid droplet fusion. May play an important role in energy homeostasis. May play a role in the response of the organism to starvation, enhancing hydrolysis of triglycerides and providing free fatty acids to other tissues to be oxidized in situations of energy depletion. This Homo sapiens (Human) protein is Patatin-like phospholipase domain-containing protein 2.